Here is a 91-residue protein sequence, read N- to C-terminus: Non-specific lipid-transfer protein 1 (91 aa).

Cystine bridges form between C4–C51, C14–C28, C29–C74, and C49–C88.

This sequence belongs to the plant LTP family. In terms of tissue distribution, detected in seeds (at protein level).

In terms of biological role, plant non-specific lipid-transfer proteins transfer phospholipids as well as galactolipids across membranes. May play a role in wax or cutin deposition in the cell walls of expanding epidermal cells and certain secretory tissues. This chain is Non-specific lipid-transfer protein 1, found in Carum carvi (Caraway).